A 545-amino-acid chain; its full sequence is Chaperonin GroEL (545 aa).

Residues 30 to 33 (TLGP), K51, 87 to 91 (DGTTT), G415, and D496 each bind ATP. The disordered stretch occupies residues 526 to 545 (PEPKAPAGGMPDMGGMGGMM). The span at 536–545 (PDMGGMGGMM) shows a compositional bias: gly residues.

This sequence belongs to the chaperonin (HSP60) family. As to quaternary structure, forms a cylinder of 14 subunits composed of two heptameric rings stacked back-to-back. Interacts with the co-chaperonin GroES.

The protein localises to the cytoplasm. The catalysed reaction is ATP + H2O + a folded polypeptide = ADP + phosphate + an unfolded polypeptide.. Together with its co-chaperonin GroES, plays an essential role in assisting protein folding. The GroEL-GroES system forms a nano-cage that allows encapsulation of the non-native substrate proteins and provides a physical environment optimized to promote and accelerate protein folding. This chain is Chaperonin GroEL, found in Paracoccus denitrificans (strain Pd 1222).